The primary structure comprises 460 residues: MKKLFECIPENYFNLFAGKNRGFYAEVAFLLYEQFHINRAGILYSLMKDEVQELIETKEELGECIDIEDEIEEKEQDSAGRANEVLRRLKKLKWIDVEVRDQFEEFIVLPVYSSRILAVLKEICENRTIEYQRYCFTTYQLLTGVEAEERPASAILESEKYSEQLYDELTILLHNMKNHMETIAAKDDIQQVLEHHFGEYKKDIIDKSYHRLRTSDHVSRYRNKILERIQTWFLDDKFMKRAAEDAVESGYSANWEEAMDGLSKKMYRVEEIYSNLDEICNQIDARHYQYLRAVLDRSRYLSTYNDSINYKISYILEHIGQMDENILDSSLFRLVQLRQLQEASLLSPRKKKGVYEPEQHEVNEISDEMREELKAENIRRMEKVMNRKKIQKFVLEAMKGRQEIEMSELNLQNEDDALYLIYVYLYGYSKGTGYKLSEEPPEFITQKGYTFSNRTIKREN.

Functionally, component of antiplasmid transformation system Wadjet type I, composed of JetA, JetB, JetC and JetD. Expression of Wadjet type I in B.subtilis (strain BEST7003) reduces the transformation efficiency of plasmid pHCMC05. This Bacillus cereus (strain Q1) protein is Wadjet protein JetA.